A 337-amino-acid chain; its full sequence is CMRF35-like molecule 1 (337 aa).

Positions 1 to 19 (MHLSLLVPFLFWITGCCTA) are cleaved as a signal peptide. The 106-residue stretch at 20-125 (EDPVTGPEEV…LDPMFKVTVN (106 aa)) folds into the Ig-like V-type domain. Over 20 to 193 (EDPVTGPEEV…GVGDGFLDLS (174 aa)) the chain is Extracellular. Positions 39 to 45 (VQCRYTS) are plays an important role in murine norovirus (MNV) binding. Disulfide bonds link cysteine 41–cysteine 109 and cysteine 55–cysteine 63. The chain crosses the membrane as a helical span at residues 194–214 (VLLPVISAVLLLLLLVASLFA). Over 215–337 (WRMVRRQKKA…IRRPLPAAMP (123 aa)) the chain is Cytoplasmic. 2 disordered regions span residues 248 to 270 (QPRTSPGSSWKKGSSMSSSGKDH) and 318 to 337 (LEEETTEYSSIRRPLPAAMP). Over residues 252–266 (SPGSSWKKGSSMSSS) the composition is skewed to low complexity.

It belongs to the CD300 family. Interacts with PTPN6/SHP-1 in a tyrosine phosphorylation dependent manner. Interacts with IL4R. Phosphorylated on tyrosine. As to expression, expressed in myeloid cells. Present on the surface of macrophages (at protein level). Highly expressed by alveolar, splenic macrophages and bone marrow-derived dendritic cells. Expression is increased following aeroallergen challenge in macrophages, mast cells, and eosinophils.

Its subcellular location is the cell membrane. In terms of biological role, acts as an inhibitory receptor for myeloid cells and mast cells. Positively regulates the phagocytosis of apoptotic cells (efferocytosis) via phosphatidylserine (PS) recognition; recognizes and binds PS as a ligand which is expressed on the surface of apoptotic cells. Plays an important role in the maintenance of immune homeostasis, by promoting macrophage-mediated efferocytosis and by inhibiting dendritic cell-mediated efferocytosis. Negatively regulates Fc epsilon receptor-dependent mast cell activation and allergic responses via binding to ceramide which acts as a ligand. May act as a coreceptor for interleukin 4 (IL-4). Associates with and regulates IL-4 receptor alpha-mediated responses by augmenting IL-4- and IL-13-induced signaling. Negatively regulates the Toll-like receptor (TLR) signaling mediated by MYD88 and TRIF through activation of PTPN6/SHP-1 and PTPN11/SHP-2. Inhibits osteoclast formation. Induces macrophage cell death upon engagement. Its function is as follows. (Microbial infection) Acts as a functional receptor for murine norovirus (MNV). Mediates binding to the cell surface and is both necessary and sufficient for viral entry and replication. This interaction requires Mg(2+) and Ca(2+) and is enhanced by bile acids. Primary determinant of MNV species tropism and is sufficient to render cells permissive to infection by MNV. Can render nonmurine mammalian cells susceptible to MNV infection. This is CMRF35-like molecule 1 (Cd300lf) from Mus musculus (Mouse).